The chain runs to 393 residues: Riboflavin biosynthesis protein RibBA (393 aa).

The tract at residues Met1 to Ala200 is DHBP synthase. Residues Arg27 to Glu28, Asp32, Arg139 to Thr143, and Glu163 each bind D-ribulose 5-phosphate. A Mg(2+)-binding site is contributed by Glu28. Position 142 (His142) interacts with Mg(2+). Residues Val201–Ile393 are GTP cyclohydrolase II. Arg249 to Ala253 contacts GTP. Residues Cys254, Cys265, and Cys267 each coordinate Zn(2+). GTP contacts are provided by residues Gln270, Glu291–Arg293, and Thr313. Asp325 functions as the Proton acceptor; for GTP cyclohydrolase activity in the catalytic mechanism. Residue Arg327 is the Nucleophile; for GTP cyclohydrolase activity of the active site. GTP-binding residues include Ser348 and Lys353.

The protein in the N-terminal section; belongs to the DHBP synthase family. In the C-terminal section; belongs to the GTP cyclohydrolase II family. The cofactor is Mg(2+). It depends on Mn(2+) as a cofactor. Requires Zn(2+) as cofactor.

It carries out the reaction D-ribulose 5-phosphate = (2S)-2-hydroxy-3-oxobutyl phosphate + formate + H(+). The enzyme catalyses GTP + 4 H2O = 2,5-diamino-6-hydroxy-4-(5-phosphoribosylamino)-pyrimidine + formate + 2 phosphate + 3 H(+). Its pathway is cofactor biosynthesis; riboflavin biosynthesis; 2-hydroxy-3-oxobutyl phosphate from D-ribulose 5-phosphate: step 1/1. The protein operates within cofactor biosynthesis; riboflavin biosynthesis; 5-amino-6-(D-ribitylamino)uracil from GTP: step 1/4. Functionally, catalyzes the conversion of D-ribulose 5-phosphate to formate and 3,4-dihydroxy-2-butanone 4-phosphate. In terms of biological role, catalyzes the conversion of GTP to 2,5-diamino-6-ribosylamino-4(3H)-pyrimidinone 5'-phosphate (DARP), formate and pyrophosphate. This is Riboflavin biosynthesis protein RibBA from Staphylococcus epidermidis (strain ATCC 35984 / DSM 28319 / BCRC 17069 / CCUG 31568 / BM 3577 / RP62A).